Consider the following 227-residue polypeptide: 2-C-methyl-D-erythritol 4-phosphate cytidylyltransferase (227 aa).

This sequence belongs to the IspD/TarI cytidylyltransferase family. IspD subfamily.

The catalysed reaction is 2-C-methyl-D-erythritol 4-phosphate + CTP + H(+) = 4-CDP-2-C-methyl-D-erythritol + diphosphate. It functions in the pathway isoprenoid biosynthesis; isopentenyl diphosphate biosynthesis via DXP pathway; isopentenyl diphosphate from 1-deoxy-D-xylulose 5-phosphate: step 2/6. In terms of biological role, catalyzes the formation of 4-diphosphocytidyl-2-C-methyl-D-erythritol from CTP and 2-C-methyl-D-erythritol 4-phosphate (MEP). This Lachnospira eligens (strain ATCC 27750 / DSM 3376 / VPI C15-48 / C15-B4) (Eubacterium eligens) protein is 2-C-methyl-D-erythritol 4-phosphate cytidylyltransferase.